The sequence spans 286 residues: 4-diphosphocytidyl-2-C-methyl-D-erythritol kinase (286 aa).

Residue Lys13 is part of the active site. 99–109 (PMGGGLGGGSS) serves as a coordination point for ATP. Asp141 is a catalytic residue.

This sequence belongs to the GHMP kinase family. IspE subfamily.

The enzyme catalyses 4-CDP-2-C-methyl-D-erythritol + ATP = 4-CDP-2-C-methyl-D-erythritol 2-phosphate + ADP + H(+). Its pathway is isoprenoid biosynthesis; isopentenyl diphosphate biosynthesis via DXP pathway; isopentenyl diphosphate from 1-deoxy-D-xylulose 5-phosphate: step 3/6. Its function is as follows. Catalyzes the phosphorylation of the position 2 hydroxy group of 4-diphosphocytidyl-2C-methyl-D-erythritol. The polypeptide is 4-diphosphocytidyl-2-C-methyl-D-erythritol kinase (Herminiimonas arsenicoxydans).